The sequence spans 129 residues: Short-chain dehydrogenase/reductase homolog YusR (129 aa).

Belongs to the short-chain dehydrogenases/reductases (SDR) family.

This is Short-chain dehydrogenase/reductase homolog YusR (yusR) from Bacillus subtilis (strain 168).